The primary structure comprises 418 residues: Tyrosine--tRNA ligase (418 aa).

Tyrosine 34 is an L-tyrosine binding site. The 'HIGH' region motif lies at 39–48; it reads PTADSLHLGH. L-tyrosine contacts are provided by tyrosine 169 and glutamine 173. The 'KMSKS' region motif lies at 229 to 233; sequence KFGKS. Lysine 232 provides a ligand contact to ATP. One can recognise an S4 RNA-binding domain in the interval 352–418; the sequence is LNIVELLVNA…GKKKNFVLTY (67 aa).

The protein belongs to the class-I aminoacyl-tRNA synthetase family. TyrS type 1 subfamily. Homodimer.

The protein localises to the cytoplasm. The catalysed reaction is tRNA(Tyr) + L-tyrosine + ATP = L-tyrosyl-tRNA(Tyr) + AMP + diphosphate + H(+). Its function is as follows. Catalyzes the attachment of tyrosine to tRNA(Tyr) in a two-step reaction: tyrosine is first activated by ATP to form Tyr-AMP and then transferred to the acceptor end of tRNA(Tyr). This is Tyrosine--tRNA ligase from Streptococcus thermophilus (strain ATCC BAA-491 / LMD-9).